The following is a 95-amino-acid chain: RING finger protein Z (95 aa).

Gly2 is lipidated: N-myristoyl glycine; by host. An RING-type; atypical zinc finger spans residues 38-74 (CKSCWFANKGLIKCSNHYLCLKCLTAMLSRSDYCGIC). A PTAP/PSAP motif motif is present at residues 88-91 (PSAP).

It belongs to the arenaviridae Z protein family. As to quaternary structure, interacts with protein NP; this interaction probably directs the encapsidated genome to budding sites. Interacts (via RING domain) with polymerase L; this interaction inhibits viral transcription and replication, Z partially blocks the product exit tunnel for the releasing nascent RNA product. Interacts with the glycoprotein complex; this interaction plays a role in virion budding. Interacts with host eIF4E; this interaction results in eIF4E reduced affinity for its substrate, the 5'-m7 G cap structure. Interacts (via late-budding domain) with host TSG101; this interaction is essential for budding and release of viral particles. Interacts with host RPLP0; this interaction may serve to load ribosome-like particles inside the virion. Interacts with host PML; this interaction induces PML bodies redistribution in the cytoplasm upon viral infection. Myristoylation is required for the role of RING finger protein Z in assembly and budding.

It localises to the virion. Its subcellular location is the host cytoplasm. The protein resides in the host perinuclear region. It is found in the host cell membrane. In terms of biological role, plays a crucial role in virion assembly and budding. Expressed late in the virus life cycle, it acts as an inhibitor of viral transcription and RNA synthesis by interacting with the viral polymerase L. Presumably recruits the NP encapsidated genome to cellular membranes at budding sites via direct interaction with NP. Plays critical roles in the final steps of viral release by interacting with host TSG101, a member of the vacuolar protein-sorting pathway and using other cellular host proteins involved in vesicle formation pathway. The budding of the virus progeny occurs after association of protein Z with the viral glycoprotein complex SSP-GP1-GP2 at the cell periphery, step that requires myristoylation of protein Z. Also selectively represses protein production by associating with host eIF4E. In cell-based minigenome assay, has an inhibitory effect on the ribonucleoprotein machinery (vRNP), which is responsible for the replication and transcription of the viral genome. The polypeptide is RING finger protein Z (Bear Canyon mammarenavirus (isolate Mouse/United States/AV A0070039/2000) (BCNV)).